The primary structure comprises 126 residues: FCS-Like Zinc finger 17 (126 aa).

The FLZ-type zinc finger occupies 41-85 (CFLKTCHLCNKQLHQDKDVYMYRGDLGFCSRECRESQMLIDDRKE).

It belongs to the FLZ family. Interacts with KIN10 and KIN11 via its FLZ-type zinc finger domain. Forms heterodimer with FLZ2 in vitro.

The protein resides in the nucleus. It is found in the cytoplasm. In terms of biological role, may act as an adapter to facilitate the interaction of SnRK1 complex with effector proteins, conferring tissue- and stimulus-type specific differences in the SnRK1 regulation pathway. This is FCS-Like Zinc finger 17 from Arabidopsis thaliana (Mouse-ear cress).